A 313-amino-acid chain; its full sequence is Ribosomal RNA small subunit methyltransferase H (313 aa).

S-adenosyl-L-methionine contacts are provided by residues 35–37 (GGH), Asp-55, Phe-79, Asp-100, and Gln-107.

This sequence belongs to the methyltransferase superfamily. RsmH family.

It localises to the cytoplasm. The catalysed reaction is cytidine(1402) in 16S rRNA + S-adenosyl-L-methionine = N(4)-methylcytidine(1402) in 16S rRNA + S-adenosyl-L-homocysteine + H(+). In terms of biological role, specifically methylates the N4 position of cytidine in position 1402 (C1402) of 16S rRNA. The polypeptide is Ribosomal RNA small subunit methyltransferase H (Burkholderia mallei (strain NCTC 10247)).